The primary structure comprises 366 residues: S-adenosylmethionine:tRNA ribosyltransferase-isomerase (366 aa).

This sequence belongs to the QueA family. In terms of assembly, monomer.

The protein resides in the cytoplasm. It carries out the reaction 7-aminomethyl-7-carbaguanosine(34) in tRNA + S-adenosyl-L-methionine = epoxyqueuosine(34) in tRNA + adenine + L-methionine + 2 H(+). The protein operates within tRNA modification; tRNA-queuosine biosynthesis. Functionally, transfers and isomerizes the ribose moiety from AdoMet to the 7-aminomethyl group of 7-deazaguanine (preQ1-tRNA) to give epoxyqueuosine (oQ-tRNA). The sequence is that of S-adenosylmethionine:tRNA ribosyltransferase-isomerase from Caulobacter vibrioides (strain ATCC 19089 / CIP 103742 / CB 15) (Caulobacter crescentus).